We begin with the raw amino-acid sequence, 139 residues long: FAD synthase (139 aa).

ATP contacts are provided by residues 9-10 (TF), 14-17 (HPGH), and Asn92.

Belongs to the archaeal FAD synthase family. As to quaternary structure, homodimer. The cofactor is a divalent metal cation.

It carries out the reaction FMN + ATP + H(+) = FAD + diphosphate. It participates in cofactor biosynthesis; FAD biosynthesis; FAD from FMN: step 1/1. Functionally, catalyzes the transfer of the AMP portion of ATP to flavin mononucleotide (FMN) to produce flavin adenine dinucleotide (FAD) coenzyme. The chain is FAD synthase from Methanocella paludicola (strain DSM 17711 / JCM 13418 / NBRC 101707 / SANAE).